Consider the following 1225-residue polypeptide: DNA-directed RNA polymerase subunit beta' (1225 aa).

Zn(2+)-binding residues include cysteine 60, cysteine 62, cysteine 75, and cysteine 78. Aspartate 450, aspartate 452, and aspartate 454 together coordinate Mg(2+). Zn(2+) is bound by residues cysteine 818, cysteine 892, cysteine 899, and cysteine 902.

This sequence belongs to the RNA polymerase beta' chain family. The RNAP catalytic core consists of 2 alpha, 1 beta, 1 beta' and 1 omega subunit. When a sigma factor is associated with the core the holoenzyme is formed, which can initiate transcription. Mg(2+) is required as a cofactor. Zn(2+) serves as cofactor.

It catalyses the reaction RNA(n) + a ribonucleoside 5'-triphosphate = RNA(n+1) + diphosphate. DNA-dependent RNA polymerase catalyzes the transcription of DNA into RNA using the four ribonucleoside triphosphates as substrates. The protein is DNA-directed RNA polymerase subunit beta' of Streptococcus pneumoniae (strain ATCC 700669 / Spain 23F-1).